Here is a 386-residue protein sequence, read N- to C-terminus: MFGSSREIRPYLARQMLKTTLYGSWLLGIFPFTLDSGKRIRQLRRSRCLTLYGLVLNYFLIFTLIRLAFEYRKHKLEAFKRNPVLEMINVVIGIINVLSALIVHFMNFWGSRKVGEICNELLILEYQDFEGLNGRNCPNFNCFVIQKCLTILGQLLSFFTLNFALPGLEFHICLVLLSCLMEFSLNLNIMHYHVGVLLIYRYVWLINEQLKDLVSQLKLNPETDFSRIHQFLSLYKRLLELNRKLVIAYEYQMTLFIIAQLSGNIVVIYFLIVYGLSMRTYSIFLVAFPNSLLINIWDFWLCIAACDLTEKAGDETAIILKIFSDLEHRDDKLEMSVNEFAWLCSHRKFRFQLCGLFSMNCRMGFKMIITTFLYLVYLVQFDYMNL.

Residues 1-48 are Cytoplasmic-facing; it reads MFGSSREIRPYLARQMLKTTLYGSWLLGIFPFTLDSGKRIRQLRRSRC. A helical membrane pass occupies residues 49 to 69; it reads LTLYGLVLNYFLIFTLIRLAF. The Extracellular portion of the chain corresponds to 70 to 89; sequence EYRKHKLEAFKRNPVLEMIN. The chain crosses the membrane as a helical span at residues 90-110; sequence VVIGIINVLSALIVHFMNFWG. At 111–155 the chain is on the cytoplasmic side; the sequence is SRKVGEICNELLILEYQDFEGLNGRNCPNFNCFVIQKCLTILGQL. Residues 156 to 176 form a helical membrane-spanning segment; that stretch reads LSFFTLNFALPGLEFHICLVL. Topologically, residues 177 to 178 are extracellular; that stretch reads LS. The helical transmembrane segment at 179–199 threads the bilayer; that stretch reads CLMEFSLNLNIMHYHVGVLLI. The Cytoplasmic segment spans residues 200 to 254; the sequence is YRYVWLINEQLKDLVSQLKLNPETDFSRIHQFLSLYKRLLELNRKLVIAYEYQMT. Residues 255 to 275 form a helical membrane-spanning segment; that stretch reads LFIIAQLSGNIVVIYFLIVYG. The Extracellular portion of the chain corresponds to 276–282; the sequence is LSMRTYS. Residues 283–303 form a helical membrane-spanning segment; it reads IFLVAFPNSLLINIWDFWLCI. Topologically, residues 304-363 are cytoplasmic; it reads AACDLTEKAGDETAIILKIFSDLEHRDDKLEMSVNEFAWLCSHRKFRFQLCGLFSMNCRM. Residues 364–384 traverse the membrane as a helical segment; that stretch reads GFKMIITTFLYLVYLVQFDYM. Over 385–386 the chain is Extracellular; sequence NL.

Belongs to the insect chemoreceptor superfamily. Gustatory receptor (GR) family. Gr22e subfamily. Expressed in taste bristles in the foreleg and labial palps. In larvae, is expressed in neurons of the dorsal and posterior pharyngeal sense organs. Expressed in taste neurons that mediate sensitivity to bitter compounds.

It is found in the cell membrane. Probable gustatory receptor which mediates acceptance or avoidance behavior, depending on its substrates. Seems to be involved in the sensing of bitter taste since it is expressed in neurons that mediate sensitivity to bitter compounds. The chain is Putative gustatory receptor 22b from Drosophila melanogaster (Fruit fly).